Reading from the N-terminus, the 1293-residue chain is DNA-directed RNA polymerase subunit beta' (1293 aa).

Residues cysteine 60, cysteine 62, cysteine 75, and cysteine 78 each contribute to the Zn(2+) site. Mg(2+) is bound by residues aspartate 535, aspartate 537, and aspartate 539. 4 residues coordinate Zn(2+): cysteine 873, cysteine 950, cysteine 957, and cysteine 960.

The protein belongs to the RNA polymerase beta' chain family. The RNAP catalytic core consists of 2 alpha, 1 beta, 1 beta' and 1 omega subunit. When a sigma factor is associated with the core the holoenzyme is formed, which can initiate transcription. Mg(2+) is required as a cofactor. The cofactor is Zn(2+).

The enzyme catalyses RNA(n) + a ribonucleoside 5'-triphosphate = RNA(n+1) + diphosphate. Functionally, DNA-dependent RNA polymerase catalyzes the transcription of DNA into RNA using the four ribonucleoside triphosphates as substrates. This Cutibacterium acnes (strain DSM 16379 / KPA171202) (Propionibacterium acnes) protein is DNA-directed RNA polymerase subunit beta'.